The sequence spans 187 residues: Flavin prenyltransferase LpdB (187 aa).

FMN-binding positions include Gly10–Ser12, Ser37, Ser88–Thr91, and Arg123. Dimethylallyl phosphate is bound by residues Tyr153 and Lys169.

This sequence belongs to the UbiX/PAD1 family.

It catalyses the reaction dimethylallyl phosphate + FMNH2 = prenylated FMNH2 + phosphate. Functionally, involved in tannin degradation. Flavin prenyltransferase that catalyzes the synthesis of the prenylated FMN cofactor (prenyl-FMN) for gallate decarboxylase LpdC. The prenyltransferase is metal-independent and links a dimethylallyl moiety from dimethylallyl monophosphate (DMAP) to the flavin N5 and C6 atoms of FMN. The chain is Flavin prenyltransferase LpdB from Lactiplantibacillus plantarum (strain ATCC BAA-793 / NCIMB 8826 / WCFS1) (Lactobacillus plantarum).